Reading from the N-terminus, the 562-residue chain is ATP-dependent RNA helicase dbp2 (562 aa).

Residues 132-160 (ETFDEAGFPRYVMDEVKAQGFPAPTAIQS) carry the Q motif motif. A Helicase ATP-binding domain is found at 163–338 (WPMALSGRDV…ADFLTDFIQV (176 aa)). 176 to 183 (AETGSGKT) provides a ligand contact to ATP. Residues 286 to 289 (DEAD) carry the DEAD box motif. One can recognise a Helicase C-terminal domain in the interval 370–515 (HLEKIMEGRE…QIDPRLAEMA (146 aa)). An RNA-binding RGG-box region spans residues 526-548 (GGYRGRGGGGWRGGRGGGGGGGS). Residues 536-550 (WRGGRGGGGGGGSVG) show a composition bias toward gly residues. Residues 536 to 562 (WRGGRGGGGGGGSVGGANALPLNNRRW) are disordered.

This sequence belongs to the DEAD box helicase family. DDX5/DBP2 subfamily. As to quaternary structure, associates with polysomes.

Its subcellular location is the cytoplasm. It localises to the nucleus. The catalysed reaction is ATP + H2O = ADP + phosphate + H(+). Functionally, ATP-dependent RNA helicase involved nonsense-mediated mRNA decay and ribosome biogenesis through rRNA processing. This is ATP-dependent RNA helicase dbp2 (drh-1) from Neurospora crassa (strain ATCC 24698 / 74-OR23-1A / CBS 708.71 / DSM 1257 / FGSC 987).